The sequence spans 270 residues: Tetraspanin-17 (270 aa).

The Cytoplasmic portion of the chain corresponds to 1–19 (MPGKHQHFQEPEVGCCGKY). A helical transmembrane segment spans residues 20 to 40 (FLFGFNIVFWVLGALFLAIGL). Residues 41–63 (WAWGEKGVLSNISALTDLGGLDP) lie on the Extracellular side of the membrane. Asn-51 carries N-linked (GlcNAc...) asparagine glycosylation. Residues 64–84 (VWLFVVVGGVMSVLGFAGCIG) form a helical membrane-spanning segment. Topologically, residues 85-94 (ALRENTFLLK) are cytoplasmic. Residues 95–115 (FFSVFLGLIFFLELATGILAF) form a helical membrane-spanning segment. The Extracellular segment spans residues 116-234 (VFKDWIRDQL…GQFEKWLQDN (119 aa)). 4 cysteine pairs are disulfide-bonded: Cys-155–Cys-223, Cys-156–Cys-188, Cys-172–Cys-182, and Cys-189–Cys-202. Asn-171 carries N-linked (GlcNAc...) asparagine glycosylation. Residues 235–255 (LIVVAGVFMGIALLQIFGICL) traverse the membrane as a helical segment. Topologically, residues 256–270 (AQNLVSDIKAVKANW) are cytoplasmic.

The protein belongs to the tetraspanin (TM4SF) family. Interacts with ADAM10; the interaction influences ADAM10 substrate specificity, endocytosis and turnover.

The protein localises to the cell membrane. In terms of biological role, part of TspanC8 subgroup, composed of 6 members that interact with the transmembrane metalloprotease ADAM10. This interaction is required for ADAM10 exit from the endoplasmic reticulum and for enzymatic maturation and trafficking to the cell surface as well as substrate specificity. Different TspanC8/ADAM10 complexes have distinct substrates. Seems to regulate VE-cadherin expression in endothelial cells probably through interaction with ADAM10, promoting leukocyte transmigration. In Homo sapiens (Human), this protein is Tetraspanin-17.